We begin with the raw amino-acid sequence, 102 residues long: Large ribosomal subunit protein bL21 (102 aa).

The protein belongs to the bacterial ribosomal protein bL21 family. Part of the 50S ribosomal subunit. Contacts protein L20.

This protein binds to 23S rRNA in the presence of protein L20. This is Large ribosomal subunit protein bL21 from Geobacter metallireducens (strain ATCC 53774 / DSM 7210 / GS-15).